Reading from the N-terminus, the 401-residue chain is Homocitrate synthase (401 aa).

Positions 22–271 constitute a Pyruvate carboxyltransferase domain; sequence VRFCDTTLRD…KLPIDLDTTS (250 aa). Residues 367–401 are disordered; sequence TRHKRGLDSRDLPGTSRAGRDAGPRAGTPTREEPV.

It belongs to the alpha-IPM synthase/homocitrate synthase family.

The enzyme catalyses acetyl-CoA + 2-oxoglutarate + H2O = (2R)-homocitrate + CoA + H(+). Its function is as follows. This protein is a Fe-Mo-cofactor biosynthetic component. This chain is Homocitrate synthase (nifV), found in Frankia sp. (strain FaC1).